Here is a 112-residue protein sequence, read N- to C-terminus: Thioredoxin (112 aa).

One can recognise a Thioredoxin domain in the interval 2-112; the sequence is SEDSATVAVT…ALLRELSDAL (111 aa). The cysteines at positions 35 and 38 are disulfide-linked.

It belongs to the thioredoxin family.

Functionally, participates in various redox reactions through the reversible oxidation of its active center dithiol to a disulfide and catalyzes dithiol-disulfide exchange reactions. This Mycolicibacterium smegmatis (Mycobacterium smegmatis) protein is Thioredoxin (trxA).